A 170-amino-acid chain; its full sequence is Protein GrpE (170 aa).

The tract at residues 1–29 (MSEEIKNEEIVEEVEATEEVVETPEKSEL) is disordered. Residues 10–22 (IVEEVEATEEVVE) are compositionally biased toward acidic residues.

Belongs to the GrpE family. Homodimer.

The protein localises to the cytoplasm. Functionally, participates actively in the response to hyperosmotic and heat shock by preventing the aggregation of stress-denatured proteins, in association with DnaK and GrpE. It is the nucleotide exchange factor for DnaK and may function as a thermosensor. Unfolded proteins bind initially to DnaJ; upon interaction with the DnaJ-bound protein, DnaK hydrolyzes its bound ATP, resulting in the formation of a stable complex. GrpE releases ADP from DnaK; ATP binding to DnaK triggers the release of the substrate protein, thus completing the reaction cycle. Several rounds of ATP-dependent interactions between DnaJ, DnaK and GrpE are required for fully efficient folding. The chain is Protein GrpE from Streptococcus suis (strain 98HAH33).